A 770-amino-acid chain; its full sequence is NAD-dependent malic enzyme (770 aa).

The interval 1 to 440 (MNTGDKAKSQ…KLNRFVFRSG (440 aa)) is malic enzyme. Lysine 107 functions as the Proton acceptor in the catalytic mechanism. 2 residues coordinate a divalent metal cation: glutamate 149 and aspartate 150. NAD(+) is bound by residues aspartate 175 and asparagine 300. The segment at 441–770 (FIMKPVFAAA…LAVVESSHPV (330 aa)) is phosphate acetyltransferase.

The protein in the N-terminal section; belongs to the malic enzymes family. This sequence in the C-terminal section; belongs to the phosphate acetyltransferase and butyryltransferase family. As to quaternary structure, homooctamer. It depends on Mg(2+) as a cofactor. Requires Mn(2+) as cofactor.

The catalysed reaction is (S)-malate + NAD(+) = pyruvate + CO2 + NADH. With respect to regulation, subject to substrate inhibition and shows allosteric regulation by acetyl-CoA. Functionally, required for symbiotic nitrogen fixation. Plays a key role in the conversion of malate to acetyl-CoA for efficient tricarboxylic acid cycle function in nitrogen-fixating bacteria. This chain is NAD-dependent malic enzyme (dme), found in Rhizobium meliloti (strain 1021) (Ensifer meliloti).